The chain runs to 184 residues: UPF0301 protein RHOS4_26140 (184 aa).

It belongs to the UPF0301 (AlgH) family.

The protein is UPF0301 protein RHOS4_26140 of Cereibacter sphaeroides (strain ATCC 17023 / DSM 158 / JCM 6121 / CCUG 31486 / LMG 2827 / NBRC 12203 / NCIMB 8253 / ATH 2.4.1.) (Rhodobacter sphaeroides).